A 123-amino-acid polypeptide reads, in one-letter code: Protein crumbs homolog 3 (123 aa).

An N-terminal signal peptide occupies residues 1–26; that stretch reads MASPGLGLLLALGLPLLPARWGRAWG. Over 27-59 the chain is Extracellular; it reads QTLDPHVNENGTITPSAPGSGSNGALSQEAITA. N-linked (GlcNAc...) asparagine glycosylation is present at Asn36. A helical transmembrane segment spans residues 60-80; the sequence is IIVVFSLLAAVLLAVGLVLLL. Over 81-120 the chain is Cytoplasmic; that stretch reads RKLREKRQTQGTYRPSSEEQFNHAAEARAPQDSKETVRGC. Residues 87-123 form a disordered region; sequence RQTQGTYRPSSEEQFNHAAEARAPQDSKETVRGCLPI. Positions 96 to 117 are enriched in basic and acidic residues; that stretch reads SSEEQFNHAAEARAPQDSKETV. Positions 119–123 match the PDZ-binding motif; sequence GCLPI.

Component of a complex composed of CRB3, PALS1 and PATJ. Interacts (via C-terminus) with PALS1 (via PDZ domain). Interacts with PARD6A. Interacts (via intracellular domain) with EPB41L5. Interacts with WDR83.

It localises to the apical cell membrane. Its subcellular location is the cell junction. It is found in the tight junction. Functionally, involved in the establishment of cell polarity in mammalian epithelial cells. Regulates the morphogenesis of tight junctions. Involved in promoting phosphorylation and cytoplasmic retention of transcriptional coactivators YAP1 and WWTR1/TAZ which leads to suppression of TGFB1-dependent transcription of target genes such as CCN2/CTGF, SERPINE1/PAI1, SNAI1/SNAIL1 and SMAD7. This chain is Protein crumbs homolog 3, found in Canis lupus familiaris (Dog).